A 428-amino-acid polypeptide reads, in one-letter code: Probable pectin lyase F (428 aa).

An N-terminal signal peptide occupies residues 1–20 (MVLLHPLLTAAALLGASARA). Cysteine 83 and cysteine 107 are disulfide-bonded. Residue arginine 257 is part of the active site. The N-linked (GlcNAc...) asparagine glycan is linked to asparagine 276. A disulfide bond links cysteine 324 and cysteine 332. Disordered stretches follow at residues 337-367 (LTSSGELSGNDEAVLSGWPKGEGDTKAMTTD) and 383-428 (GSGG…HHHY). Positions 389–417 (AASSSASITPSPTSSAIPSSSATPSSSAY) are enriched in low complexity. The span at 418–428 (ARRHYARHHHY) shows a compositional bias: basic residues.

This sequence belongs to the polysaccharide lyase 1 family.

The protein localises to the secreted. It carries out the reaction Eliminative cleavage of (1-&gt;4)-alpha-D-galacturonan methyl ester to give oligosaccharides with 4-deoxy-6-O-methyl-alpha-D-galact-4-enuronosyl groups at their non-reducing ends.. Its function is as follows. Pectinolytic enzymes consist of four classes of enzymes: pectin lyase, polygalacturonase, pectin methylesterase and rhamnogalacturonase. Among pectinolytic enzymes, pectin lyase is the most important in depolymerization of pectin, since it cleaves internal glycosidic bonds of highly methylated pectins. The sequence is that of Probable pectin lyase F (pelF) from Aspergillus flavus (strain ATCC 200026 / FGSC A1120 / IAM 13836 / NRRL 3357 / JCM 12722 / SRRC 167).